A 581-amino-acid chain; its full sequence is Putative phospholipase B-like 3 (581 aa).

The first 16 residues, 1 to 16 (MKLLFFLFGLIFAVEQ), serve as a signal peptide directing secretion. Residues N50, N82, N132, N169, N215, N309, N543, N546, and N560 are each glycosylated (N-linked (GlcNAc...) asparagine).

It belongs to the phospholipase B-like family.

The protein localises to the secreted. Putative phospholipase. The sequence is that of Putative phospholipase B-like 3 from Caenorhabditis elegans.